The primary structure comprises 220 residues: Probable cutinase 5 (220 aa).

The first 18 residues, 1–18 (MVALHTLLLTAFAAVSLA), serve as a signal peptide directing secretion. 2 disulfides stabilise this stretch: Cys-42-Cys-121 and Cys-68-Cys-82. Ser-132 functions as the Nucleophile in the catalytic mechanism. A disulfide bond links Cys-183 and Cys-190. Residue Asp-187 is part of the active site. His-200 functions as the Proton donor/acceptor in the catalytic mechanism.

Belongs to the cutinase family.

It localises to the secreted. It carries out the reaction cutin + H2O = cutin monomers.. Its function is as follows. Catalyzes the hydrolysis of complex carboxylic polyesters found in the cell wall of plants. Degrades cutin, a macromolecule that forms the structure of the plant cuticle. This Aspergillus terreus (strain NIH 2624 / FGSC A1156) protein is Probable cutinase 5.